The primary structure comprises 130 residues: Small ribosomal subunit protein eS17 (130 aa).

It belongs to the eukaryotic ribosomal protein eS17 family.

The sequence is that of Small ribosomal subunit protein eS17 (RPS17) from Theileria parva (East coast fever infection agent).